A 537-amino-acid polypeptide reads, in one-letter code: Mitochondrial inner membrane magnesium transporter MRS2 (537 aa).

Residues 1–26 constitute a mitochondrion transit peptide; sequence MQSTLCLPVPSRSLLRFLRCQSKRAF. Positions 79–112 are disordered; sequence DPVTRKLPDRNQPLTSQNHFSTSRNAQGFWSGRK. Positions 90 to 112 are enriched in polar residues; sequence QPLTSQNHFSTSRNAQGFWSGRK. The next 2 helical transmembrane spans lie at 425–445 and 456–476; these read FSVG…YGMN and GFAG…WYGL. The YGMN motif lies at 442-445; it reads YGMN.

It belongs to the CorA metal ion transporter (MIT) (TC 1.A.35) family. In terms of assembly, homopentamer. Forms homooligomers. Interacts with MFM1.

It is found in the mitochondrion inner membrane. In terms of biological role, high-conductance magnesium-selective channel that mediates the influx of magnesium into the mitochondrial matrix. Essential for the splicing of mRNA group II introns in mitochondria by affecting mitochondrial magnesium concentrations, which are critical for group II intron splicing. It also suppresses a variety of mitochondrial intron mutations and its absence may disturb the assembly of mitochondrial membrane complexes. This is Mitochondrial inner membrane magnesium transporter MRS2 (MRS2) from Gibberella zeae (strain ATCC MYA-4620 / CBS 123657 / FGSC 9075 / NRRL 31084 / PH-1) (Wheat head blight fungus).